The following is a 267-amino-acid chain: Strigolactone esterase RMS3 (267 aa).

Catalysis depends on S96, which acts as the Nucleophile. Residues D218 and H247 contribute to the active site.

The protein belongs to the AB hydrolase superfamily.

Its subcellular location is the cytoplasm. The protein resides in the nucleus. In terms of biological role, involved in strigolactone signaling pathway. Functions downstream of strigolactone synthesis, as a component of hormone signaling and as an enzyme that participates in the conversion of strigolactones to the bioactive form. Binds and hydrolyzes the synthetic strigolactone analog GR24 and its enantiomers in vitro. Forms a stable covalent complex with the D-ring of strigolactone, which is essential for hormone bioactivity. The D-ring is attached to His-247 of the catalytic triad. The hydrolysis of strigolactone into a covalently linked intermediate molecule is required to trigger strigolactone signaling. This mechanism defines RMS3 as a non-canonical hormone receptor with dual functions to generate and sense the active form of strigolactone. Strigolactones are hormones that inhibit tillering and shoot branching through the MAX-dependent pathway, contribute to the regulation of shoot architectural response to phosphate-limiting conditions and function as rhizosphere signal that stimulates hyphal branching of arbuscular mycorrhizal fungi and trigger seed germination of root parasitic weeds. This chain is Strigolactone esterase RMS3, found in Pisum sativum (Garden pea).